The sequence spans 141 residues: uncharacterized protein (141 aa).

The HIT domain maps to 10–117; that stretch reads IFCDIVQGSI…VPKYETGKGF (108 aa). A Histidine triad motif motif is present at residues 102-106; sequence HFHLH.

This is an uncharacterized protein from Mycoplasma genitalium (strain ATCC 33530 / DSM 19775 / NCTC 10195 / G37) (Mycoplasmoides genitalium).